Consider the following 448-residue polypeptide: Putative sodium-coupled neutral amino acid transporter 11 (448 aa).

The interval 1 to 20 is disordered; sequence MESERSCLLSSHDAGKGGSS. The next 11 membrane-spanning stretches (helical) occupy residues 22–42, 52–72, 94–114, 143–163, 165–185, 200–220, 246–266, 286–306, 324–344, 346–366, and 389–409; these read VSSA…IGLP, MGLL…ILLV, IGYI…MISY, FVIA…RDIA, LGKV…TVVV, AWVF…FALI, ISVG…YATF, TFGR…ECFV, SSHV…SLSY, CLGI…MFIF, and MILV…ALFP. N-linked (GlcNAc...) asparagine glycosylation is found at asparagine 425, asparagine 440, and asparagine 444.

It belongs to the amino acid/polyamine transporter 2 family.

The protein resides in the membrane. Functionally, putative sodium-dependent amino acid/proton antiporter. This is Putative sodium-coupled neutral amino acid transporter 11 (slc38a11) from Danio rerio (Zebrafish).